Reading from the N-terminus, the 153-residue chain is MSAEAGATVEQNHSYDMSCIFCRIANKQESGAELLHSDDDLVCFKDIRPAVTHHYLVVPKKHVGTCKTLTKDHVQLIKTMMEVGKSTLQKNNVTDLEDIRLGFHYPPFCSISHLHLHVLAPASQLGFLSRMIYRVNSYWFITADELIDQLQAS.

The HIT domain occupies 20–130 (IFCRIANKQE…PASQLGFLSR (111 aa)). AMP contacts are provided by residues 46–47 (DI) and 115–117 (HLH). The Histidine triad motif motif lies at 113–117 (HLHLH). Histidine 115 acts as the Tele-AMP-histidine intermediate in catalysis.

The protein belongs to the HINT family. As to quaternary structure, forms dimers to octamers and even larger oligomer.

The protein resides in the cytoplasm. It is found in the nucleus. It catalyses the reaction adenosine 5'-phosphoramidate + H2O = AMP + NH4(+). Its function is as follows. Exhibits adenosine 5'-monophosphoramidase activity, hydrolyzing purine nucleotide phosphoramidates with a single phosphate group such as adenosine 5'monophosphoramidate (AMP-NH2) to yield AMP and NH2. Hydrolyzes lysyl-AMP (AMP-N-epsilon-(N-alpha-acetyl lysine methyl ester)) generated by lysine tRNA ligase. The protein is Adenosine 5'-monophosphoramidase HINT3 (hint3) of Xenopus tropicalis (Western clawed frog).